A 958-amino-acid chain; its full sequence is Translation initiation factor IF-2 (958 aa).

Positions 50-67 are enriched in low complexity; it reads FKPAAAPKVEAKPAAPKV. Disordered stretches follow at residues 50 to 224 and 288 to 374; these read FKPA…RIDF and EVVP…HELP. Basic and acidic residues-rich tracts occupy residues 68–89, 96–118, and 138–153; these read SAEK…EEAK, SAEK…EAKP, and FKAE…AERR. The span at 157–169 shows a compositional bias: low complexity; sequence KGNNRDQQQNGNR. Composition is skewed to basic and acidic residues over residues 185–195 and 290–323; these read RDNRRFNDQAK and VPEK…DGPR. Residues 337–346 show a composition bias toward low complexity; the sequence is NQKNSNWNNN. The span at 365–374 shows a compositional bias: basic and acidic residues; the sequence is VTERKFHELP. The 168-residue stretch at 460–627 folds into the tr-type G domain; the sequence is ERPPVVTIMG…TVLLVAEIQE (168 aa). Residues 469 to 476 are G1; sequence GHVDHGKT. 469–476 is a binding site for GTP; that stretch reads GHVDHGKT. Residues 494–498 are G2; it reads GITQH. Positions 515–518 are G3; the sequence is DTPG. Residues 515-519 and 569-572 each bind GTP; these read DTPGH and NKID. A G4 region spans residues 569 to 572; the sequence is NKID. Positions 605-607 are G5; the sequence is SAK.

Belongs to the TRAFAC class translation factor GTPase superfamily. Classic translation factor GTPase family. IF-2 subfamily.

The protein localises to the cytoplasm. Functionally, one of the essential components for the initiation of protein synthesis. Protects formylmethionyl-tRNA from spontaneous hydrolysis and promotes its binding to the 30S ribosomal subunits. Also involved in the hydrolysis of GTP during the formation of the 70S ribosomal complex. This is Translation initiation factor IF-2 from Streptococcus pneumoniae serotype 4 (strain ATCC BAA-334 / TIGR4).